Consider the following 750-residue polypeptide: Ribosomal RNA large subunit methyltransferase K/L (750 aa).

The THUMP domain maps to Thr-46–Leu-157.

Belongs to the methyltransferase superfamily. RlmKL family.

The protein resides in the cytoplasm. The enzyme catalyses guanosine(2445) in 23S rRNA + S-adenosyl-L-methionine = N(2)-methylguanosine(2445) in 23S rRNA + S-adenosyl-L-homocysteine + H(+). It catalyses the reaction guanosine(2069) in 23S rRNA + S-adenosyl-L-methionine = N(2)-methylguanosine(2069) in 23S rRNA + S-adenosyl-L-homocysteine + H(+). Specifically methylates the guanine in position 2445 (m2G2445) and the guanine in position 2069 (m7G2069) of 23S rRNA. The chain is Ribosomal RNA large subunit methyltransferase K/L from Pseudomonas syringae pv. syringae (strain B728a).